A 447-amino-acid chain; its full sequence is Na(+)-translocating NADH-quinone reductase subunit A (447 aa).

Belongs to the NqrA family. As to quaternary structure, composed of six subunits; NqrA, NqrB, NqrC, NqrD, NqrE and NqrF.

The enzyme catalyses a ubiquinone + n Na(+)(in) + NADH + H(+) = a ubiquinol + n Na(+)(out) + NAD(+). Functionally, NQR complex catalyzes the reduction of ubiquinone-1 to ubiquinol by two successive reactions, coupled with the transport of Na(+) ions from the cytoplasm to the periplasm. NqrA to NqrE are probably involved in the second step, the conversion of ubisemiquinone to ubiquinol. This is Na(+)-translocating NADH-quinone reductase subunit A from Yersinia pestis.